We begin with the raw amino-acid sequence, 403 residues long: S-adenosylmethionine synthase (403 aa).

H17 is an ATP binding site. D19 contributes to the Mg(2+) binding site. K(+) is bound at residue E45. L-methionine is bound by residues E58 and Q101. A flexible loop region spans residues 101–111 (QSPDIAMGVDR). ATP contacts are provided by residues 177–179 (DGK), 244–245 (RF), D253, 259–260 (RK), A276, and K280. L-methionine is bound at residue D253. K284 is an L-methionine binding site.

Belongs to the AdoMet synthase family. Homotetramer; dimer of dimers. The cofactor is Mg(2+). It depends on K(+) as a cofactor.

Its subcellular location is the cytoplasm. The enzyme catalyses L-methionine + ATP + H2O = S-adenosyl-L-methionine + phosphate + diphosphate. It participates in amino-acid biosynthesis; S-adenosyl-L-methionine biosynthesis; S-adenosyl-L-methionine from L-methionine: step 1/1. Catalyzes the formation of S-adenosylmethionine (AdoMet) from methionine and ATP. The overall synthetic reaction is composed of two sequential steps, AdoMet formation and the subsequent tripolyphosphate hydrolysis which occurs prior to release of AdoMet from the enzyme. The sequence is that of S-adenosylmethionine synthase from Geobacillus kaustophilus (strain HTA426).